Consider the following 151-residue polypeptide: Large ribosomal subunit protein uL15 (151 aa).

The disordered stretch occupies residues 1–57 (MTLRLDSLKANKGARRRKLRKGRGIAAGQGASCGFGMRGQKSRSGRPTRPGFEGGQM). Positions 12-23 (KGARRRKLRKGR) are enriched in basic residues. Residues 25–37 (IAAGQGASCGFGM) show a composition bias toward gly residues.

Belongs to the universal ribosomal protein uL15 family. In terms of assembly, part of the 50S ribosomal subunit.

In terms of biological role, binds to the 23S rRNA. The protein is Large ribosomal subunit protein uL15 of Synechococcus sp. (strain CC9902).